Consider the following 72-residue polypeptide: Small ribosomal subunit protein bS18 (72 aa).

This sequence belongs to the bacterial ribosomal protein bS18 family. As to quaternary structure, part of the 30S ribosomal subunit. Forms a tight heterodimer with protein bS6.

Functionally, binds as a heterodimer with protein bS6 to the central domain of the 16S rRNA, where it helps stabilize the platform of the 30S subunit. The protein is Small ribosomal subunit protein bS18 of Trichodesmium erythraeum (strain IMS101).